The following is an 88-amino-acid chain: Small ribosomal subunit protein bS20 (88 aa).

The segment at 1–33 is disordered; sequence MANTSSAKKATRKIARRTAVNKSRRTQMRGSVR.

It belongs to the bacterial ribosomal protein bS20 family.

Functionally, binds directly to 16S ribosomal RNA. The polypeptide is Small ribosomal subunit protein bS20 (Rhodopseudomonas palustris (strain BisB5)).